Here is a 249-residue protein sequence, read N- to C-terminus: Probable proteasome subunit alpha type-2 (249 aa).

The protein belongs to the peptidase T1A family. As to quaternary structure, the 26S proteasome consists of a 20S proteasome core and two 19S regulatory subunits. The 20S proteasome core is composed of 28 subunits that are arranged in four stacked rings, resulting in a barrel-shaped structure. The two end rings are each formed by seven alpha subunits, and the two central rings are each formed by seven beta subunits. The catalytic chamber with the active sites is on the inside of the barrel.

The protein resides in the cytoplasm. It is found in the nucleus. In terms of biological role, the proteasome is a multicatalytic proteinase complex which is characterized by its ability to cleave peptides with Arg, Phe, Tyr, Leu, and Glu adjacent to the leaving group at neutral or slightly basic pH. The proteasome has an ATP-dependent proteolytic activity. In Neurospora crassa (strain ATCC 24698 / 74-OR23-1A / CBS 708.71 / DSM 1257 / FGSC 987), this protein is Probable proteasome subunit alpha type-2 (pca-2).